The primary structure comprises 262 residues: Tropinone reductase homolog At2g30670 (262 aa).

NADP(+) is bound at residue 13-37 (LVTGGASGIGHAIVEELAGLGARIY). Ser-146 serves as a coordination point for substrate. Tyr-159 serves as the catalytic Proton acceptor.

Belongs to the short-chain dehydrogenases/reductases (SDR) family. SDR65C subfamily.

The protein is Tropinone reductase homolog At2g30670 of Arabidopsis thaliana (Mouse-ear cress).